A 451-amino-acid chain; its full sequence is MTFNITSMDEDVLLTERESSFRVLTGCFLSVLILSTLLGNTLVCAAVIRFRHLRSKVTNFFVISLAVSDLLVAVLVMPWKAVAEIAGFWPFGTFCNIWVAFDIMCSTASILNLCVISVDRYWAISSPFRYERKMTPKVAFIMIGVAWTLSVLISFIPVQLNWHKAKTTSFFDLNITLHDRTMDNCDSSLNRTYAISSSLISFYIPVAIMIVTYTRIYRIAAKQIRRISALERAAVHAKNCQNSTSNRNSLDCQQPESSLKTSFKRETKVLKTLSVIMGVFVCCWLPFFILNCIVPFCDPSLTTSGTEPFCISSTTFDVFVWFGWANSSLNPIIYAFNADFRKAFSNLLGCYRLCPTSNNIIETVSINNNGAVVYSCQQEPKGSIPNECNLVYLIPHAIICPEDEVLKKEDESGLSKSLEKMSPAFSGILDYDADVSLEKINPITQNGQPKT.

At 1 to 22 (MTFNITSMDEDVLLTERESSFR) the chain is on the extracellular side. N4 carries N-linked (GlcNAc...) asparagine glycosylation. The chain crosses the membrane as a helical span at residues 23 to 48 (VLTGCFLSVLILSTLLGNTLVCAAVI). Over 49–59 (RFRHLRSKVTN) the chain is Cytoplasmic. The helical transmembrane segment at 60–86 (FFVISLAVSDLLVAVLVMPWKAVAEIA) threads the bilayer. Over 87–95 (GFWPFGTFC) the chain is Extracellular. C95 and C185 are joined by a disulfide. The helical transmembrane segment at 96–118 (NIWVAFDIMCSTASILNLCVISV) threads the bilayer. Residues 119–137 (DRYWAISSPFRYERKMTPK) are Cytoplasmic-facing. Residues 138–162 (VAFIMIGVAWTLSVLISFIPVQLNW) traverse the membrane as a helical segment. Residues 163–191 (HKAKTTSFFDLNITLHDRTMDNCDSSLNR) lie on the Extracellular side of the membrane. The helical transmembrane segment at 192–217 (TYAISSSLISFYIPVAIMIVTYTRIY) threads the bilayer. At 218–271 (RIAAKQIRRISALERAAVHAKNCQNSTSNRNSLDCQQPESSLKTSFKRETKVLK) the chain is on the cytoplasmic side. Residues 272 to 298 (TLSVIMGVFVCCWLPFFILNCIVPFCD) form a helical membrane-spanning segment. Topologically, residues 299 to 315 (PSLTTSGTEPFCISSTT) are extracellular. The chain crosses the membrane as a helical span at residues 316–340 (FDVFVWFGWANSSLNPIIYAFNADF). The Cytoplasmic portion of the chain corresponds to 341 to 451 (RKAFSNLLGC…PITQNGQPKT (111 aa)). Residue C350 is the site of S-palmitoyl cysteine attachment.

This sequence belongs to the G-protein coupled receptor 1 family. In terms of tissue distribution, brain.

The protein localises to the cell membrane. It is found in the cell projection. The protein resides in the cilium membrane. Dopamine receptor whose activity is mediated by G proteins which activate adenylyl cyclase. This Xenopus laevis (African clawed frog) protein is D(1A) dopamine receptor (drd1).